A 147-amino-acid chain; its full sequence is NADH-quinone oxidoreductase subunit A (147 aa).

The next 3 helical transmembrane spans lie at 13 to 33 (LFSY…LGAV), 70 to 90 (YLVA…FSWA), and 104 to 124 (VVVF…WGAL).

Belongs to the complex I subunit 3 family. NDH-1 is composed of 14 different subunits. Subunits NuoA, H, J, K, L, M, N constitute the membrane sector of the complex.

Its subcellular location is the cell inner membrane. It catalyses the reaction a quinone + NADH + 5 H(+)(in) = a quinol + NAD(+) + 4 H(+)(out). Functionally, NDH-1 shuttles electrons from NADH, via FMN and iron-sulfur (Fe-S) centers, to quinones in the respiratory chain. The immediate electron acceptor for the enzyme in this species is believed to be ubiquinone. Couples the redox reaction to proton translocation (for every two electrons transferred, four hydrogen ions are translocated across the cytoplasmic membrane), and thus conserves the redox energy in a proton gradient. The polypeptide is NADH-quinone oxidoreductase subunit A (Gluconacetobacter diazotrophicus (strain ATCC 49037 / DSM 5601 / CCUG 37298 / CIP 103539 / LMG 7603 / PAl5)).